A 158-amino-acid polypeptide reads, in one-letter code: 6,7-dimethyl-8-ribityllumazine synthase (158 aa).

5-amino-6-(D-ribitylamino)uracil contacts are provided by residues Phe23, 61-63 (SFE), and 85-87 (AVI). 90–91 (ET) serves as a coordination point for (2S)-2-hydroxy-3-oxobutyl phosphate. His93 serves as the catalytic Proton donor. Phe118 provides a ligand contact to 5-amino-6-(D-ribitylamino)uracil. Arg132 provides a ligand contact to (2S)-2-hydroxy-3-oxobutyl phosphate.

It belongs to the DMRL synthase family.

It catalyses the reaction (2S)-2-hydroxy-3-oxobutyl phosphate + 5-amino-6-(D-ribitylamino)uracil = 6,7-dimethyl-8-(1-D-ribityl)lumazine + phosphate + 2 H2O + H(+). Its pathway is cofactor biosynthesis; riboflavin biosynthesis; riboflavin from 2-hydroxy-3-oxobutyl phosphate and 5-amino-6-(D-ribitylamino)uracil: step 1/2. Functionally, catalyzes the formation of 6,7-dimethyl-8-ribityllumazine by condensation of 5-amino-6-(D-ribitylamino)uracil with 3,4-dihydroxy-2-butanone 4-phosphate. This is the penultimate step in the biosynthesis of riboflavin. The protein is 6,7-dimethyl-8-ribityllumazine synthase of Prochlorococcus marinus (strain MIT 9515).